The sequence spans 257 residues: Imidazole glycerol phosphate synthase subunit HisF (257 aa).

Catalysis depends on residues aspartate 12 and aspartate 131.

This sequence belongs to the HisA/HisF family. As to quaternary structure, heterodimer of HisH and HisF.

It is found in the cytoplasm. The enzyme catalyses 5-[(5-phospho-1-deoxy-D-ribulos-1-ylimino)methylamino]-1-(5-phospho-beta-D-ribosyl)imidazole-4-carboxamide + L-glutamine = D-erythro-1-(imidazol-4-yl)glycerol 3-phosphate + 5-amino-1-(5-phospho-beta-D-ribosyl)imidazole-4-carboxamide + L-glutamate + H(+). The protein operates within amino-acid biosynthesis; L-histidine biosynthesis; L-histidine from 5-phospho-alpha-D-ribose 1-diphosphate: step 5/9. Its function is as follows. IGPS catalyzes the conversion of PRFAR and glutamine to IGP, AICAR and glutamate. The HisF subunit catalyzes the cyclization activity that produces IGP and AICAR from PRFAR using the ammonia provided by the HisH subunit. The chain is Imidazole glycerol phosphate synthase subunit HisF from Teredinibacter turnerae (strain ATCC 39867 / T7901).